The primary structure comprises 238 residues: Survival of motor neuron-related-splicing factor 30 (238 aa).

The Tudor domain maps to 72–132 (SWKVGDKCMA…KPVEEGRKAK (61 aa)). Positions 142–160 (KKEMIAQQREYKKKKALKK) match the Nuclear localization signal motif. Position 201 is a phosphoserine (serine 201). Lysine 219 carries the N6-acetyllysine modification.

It belongs to the SMN family. As to quaternary structure, associates with spliceosomes. Associates with U4/U5/U6 tri-snRNP and with U2 snRNP.

It localises to the nucleus speckle. It is found in the nucleus. The protein localises to the cajal body. Its function is as follows. Involved in spliceosome assembly. This is Survival of motor neuron-related-splicing factor 30 (SMNDC1) from Pongo abelii (Sumatran orangutan).